The sequence spans 869 residues: Aconitate hydratase A (869 aa).

3 residues coordinate [4Fe-4S] cluster: Cys-411, Cys-477, and Cys-480.

It belongs to the aconitase/IPM isomerase family. In terms of assembly, monomer. The cofactor is [4Fe-4S] cluster.

It catalyses the reaction citrate = D-threo-isocitrate. The catalysed reaction is (2S,3R)-3-hydroxybutane-1,2,3-tricarboxylate = 2-methyl-cis-aconitate + H2O. Its pathway is carbohydrate metabolism; tricarboxylic acid cycle; isocitrate from oxaloacetate: step 2/2. It participates in organic acid metabolism; propanoate degradation. Functionally, involved in the catabolism of short chain fatty acids (SCFA) via the tricarboxylic acid (TCA)(acetyl degradation route) and the 2-methylcitrate cycle I (propionate degradation route). Catalyzes the reversible isomerization of citrate to isocitrate via cis-aconitate. Could catalyze the hydration of 2-methyl-cis-aconitate to yield (2S,3R)-2-methylisocitrate. The apo form of AcnA functions as a RNA-binding regulatory protein. This chain is Aconitate hydratase A, found in Cupriavidus necator (Alcaligenes eutrophus).